A 267-amino-acid polypeptide reads, in one-letter code: MEMO1 family protein aq_890 (267 aa).

The protein belongs to the MEMO1 family.

The chain is MEMO1 family protein aq_890 from Aquifex aeolicus (strain VF5).